We begin with the raw amino-acid sequence, 306 residues long: Glutaminase (306 aa).

Substrate contacts are provided by Ser-64, Asn-115, Glu-159, Asn-166, Tyr-190, Tyr-242, and Val-260.

This sequence belongs to the glutaminase family. Homotetramer.

The enzyme catalyses L-glutamine + H2O = L-glutamate + NH4(+). This is Glutaminase from Vibrio atlanticus (strain LGP32) (Vibrio splendidus (strain Mel32)).